The chain runs to 136 residues: ATP synthase epsilon chain, chloroplastic (136 aa).

The protein belongs to the ATPase epsilon chain family. As to quaternary structure, F-type ATPases have 2 components, CF(1) - the catalytic core - and CF(0) - the membrane proton channel. CF(1) has five subunits: alpha(3), beta(3), gamma(1), delta(1), epsilon(1). CF(0) has three main subunits: a, b and c.

It is found in the plastid. The protein resides in the chloroplast thylakoid membrane. Functionally, produces ATP from ADP in the presence of a proton gradient across the membrane. This chain is ATP synthase epsilon chain, chloroplastic, found in Chaetosphaeridium globosum (Charophycean green alga).